The following is a 283-amino-acid chain: Glutamate racemase (283 aa).

Substrate-binding positions include 28–29 (DS) and 60–61 (YG). Catalysis depends on cysteine 92, which acts as the Proton donor/acceptor. Position 93-94 (93-94 (NS)) interacts with substrate. Catalysis depends on cysteine 204, which acts as the Proton donor/acceptor. 205-206 (TH) is a substrate binding site.

Belongs to the aspartate/glutamate racemases family.

It carries out the reaction L-glutamate = D-glutamate. It functions in the pathway cell wall biogenesis; peptidoglycan biosynthesis. In terms of biological role, provides the (R)-glutamate required for cell wall biosynthesis. This is Glutamate racemase from Erwinia tasmaniensis (strain DSM 17950 / CFBP 7177 / CIP 109463 / NCPPB 4357 / Et1/99).